The chain runs to 315 residues: Energy-coupling factor transporter ATP-binding protein EcfA2 (315 aa).

The 245-residue stretch at Ile-31–Glu-275 folds into the ABC transporter domain. ATP is bound at residue Gly-68–Ser-75.

The protein belongs to the ABC transporter superfamily. Energy-coupling factor EcfA family. In terms of assembly, forms a stable energy-coupling factor (ECF) transporter complex composed of 2 membrane-embedded substrate-binding proteins (S component), 2 ATP-binding proteins (A component) and 2 transmembrane proteins (T component).

It localises to the cell membrane. Its function is as follows. ATP-binding (A) component of a common energy-coupling factor (ECF) ABC-transporter complex. Unlike classic ABC transporters this ECF transporter provides the energy necessary to transport a number of different substrates. The sequence is that of Energy-coupling factor transporter ATP-binding protein EcfA2 from Mesoplasma florum (strain ATCC 33453 / NBRC 100688 / NCTC 11704 / L1) (Acholeplasma florum).